The sequence spans 439 residues: Telomeric repeat-binding factor 1 (439 aa).

The interval 1–36 (MAEDVSSAAPSPRGCADGRDADPTEEQMAETERNDE) is disordered. A2 carries the N-acetylalanine modification. S11 bears the Phosphoserine mark. The segment covering 23–36 (PTEEQMAETERNDE) has biased composition (acidic residues). The tract at residues 58-268 (EEEEEDAGLV…AAAKVVESKR (211 aa)) is TRFH mediates dimerization. Residue K213 forms a Glycyl lysine isopeptide (Lys-Gly) (interchain with G-Cter in SUMO2) linkage. S219 carries the phosphoserine; by ATM modification. The segment at 265-378 (ESKRTRTITS…PVTPEKHRAR (114 aa)) is interaction with RLIM. The segment at 266–311 (SKRTRTITSQDKPSGNDVEMETEANLDTRKSVSDKQSAVTESSEGT) is disordered. Residues 299–311 (DKQSAVTESSEGT) show a composition bias toward polar residues. A Glycyl lysine isopeptide (Lys-Gly) (interchain with G-Cter in SUMO2) cross-link involves residue K325. The interval 326-375 (LQHGTQQQDLNKKERRVGTPQSTKKKKESRRATESRIPVSKSQPVTPEKH) is disordered. Positions 337–356 (KKERRVGTPQSTKKKKESRR) match the Nuclear localization signal motif. A Glycyl lysine isopeptide (Lys-Gly) (interchain with G-Cter in SUMO2) cross-link involves residue K366. Positions 375–432 (HRARKRQAWLWEEDKNLRSGVRKYGEGNWSKILLHYKFNNRTSVMLKDRWRTMKKLKL) constitute an HTH myb-type domain. Positions 403 to 428 (WSKILLHYKFNNRTSVMLKDRWRTMK) form a DNA-binding region, H-T-H motif.

Homodimer; can contain both isoforms. Found in a complex with POT1; TINF2 and TNKS1. Interacts with ATM, TINF2, TNKS1, TNKS2, PINX1, NEK2 and MAPRE1. Component of the shelterin complex (telosome) composed of TERF1, TERF2, TINF2, TERF2IP ACD and POT1. Interacts with RLIM (via N-terminus). Interacts with FBXO4. Interaction with TINF2 protects against interaction with FBXO4 and subsequent polyubiquitination and proteasomal degradation. Interacts with GNL3L; this interaction promotes homodimerization. Interacts with TIN2. Interacts with RTEL1. Interactions with GNL3L and TIN2 are mutually exclusive. Interacts with CCDC79/TERB1. Interacts with TRIOBP isoform 1; mediates TERF1 localization to the centrosome. Phosphorylated preferentially on Ser-219 in an ATM-dependent manner in response to ionizing DNA damage. Post-translationally, ADP-ribosylation by TNKS1 or TNKS2 diminishes its ability to bind to telomeric DNA. In terms of processing, ubiquitinated by RLIM/RNF12, leading to its degradation by the proteasome. Ubiquitinated by a SCF (SKP1-CUL1-F-box protein) ubiquitin-protein ligase complex, leading to its degradation by the proteasome. In terms of tissue distribution, highly expressed and ubiquitous. Isoform Pin2 predominates.

Its subcellular location is the nucleus. The protein localises to the cytoplasm. The protein resides in the cytoskeleton. It is found in the spindle. It localises to the chromosome. Its subcellular location is the telomere. In terms of biological role, binds the telomeric double-stranded 5'-TTAGGG-3' repeat and negatively regulates telomere length. Involved in the regulation of the mitotic spindle. Component of the shelterin complex (telosome) that is involved in the regulation of telomere length and protection. Shelterin associates with arrays of double-stranded 5'-TTAGGG-3' repeats added by telomerase and protects chromosome ends; without its protective activity, telomeres are no longer hidden from the DNA damage surveillance and chromosome ends are inappropriately processed by DNA repair pathways. The chain is Telomeric repeat-binding factor 1 (TERF1) from Homo sapiens (Human).